Reading from the N-terminus, the 38-residue chain is Large ribosomal subunit protein bL36 (38 aa).

Belongs to the bacterial ribosomal protein bL36 family.

The chain is Large ribosomal subunit protein bL36 from Chlorobium phaeobacteroides (strain BS1).